The chain runs to 394 residues: RNA demethylase ALKBH5 (394 aa).

2 disordered regions span residues 1 to 26 (MAAA…YKAG) and 48 to 83 (AEPY…EEAR). Residue A2 is modified to N-acetylalanine. Residue K57 forms a Glycyl lysine isopeptide (Lys-Gly) (interchain with G-Cter in ubiquitin) linkage. Over residues 59 to 83 (KYPEDSDPERSDFEEQQLQKEEEAR) the composition is skewed to basic and acidic residues. Residues S64 and S69 each carry the phosphoserine modification. Residues 67–116 (ERSDFEEQQLQKEEEARKVKSGIRQMRLFSQDECAKIEARIDEVVSRAEK) adopt a coiled-coil conformation. A Glycyl lysine isopeptide (Lys-Gly) (interchain with G-Cter in SUMO1) cross-link involves residue K86. At S87 the chain carries Phosphoserine. N6-acetyllysine is present on K132. Residue Y139 is part of the active site. N193, Y195, and H204 together coordinate 2-oxoglutarate. Residues C230 and C267 are joined by a disulfide bond. K235 carries the post-translational modification N6-acetyllysine. The 2-oxoglutarate site is built by H266 and R277. The tract at residues 298-394 (SSSVLPPSYA…PARKVKMRRH (97 aa)) is disordered. K321 is covalently cross-linked (Glycyl lysine isopeptide (Lys-Gly) (interchain with G-Cter in SUMO1)). S325 is modified (phosphoserine). K328 is covalently cross-linked (Glycyl lysine isopeptide (Lys-Gly) (interchain with G-Cter in SUMO2)). The span at 328–349 (KADPDAAHRPRILEMDKEENRR) shows a compositional bias: basic and acidic residues. Phosphoserine is present on residues S371 and S384.

It belongs to the alkB family. As to quaternary structure, monomer. Interacts with RBM33; promoting desumoylation by SENP1 and recruitment to N(6)-methyladenosine-containing mRNAs. Interacts (when acetylated by KAT8) with PSPC1; interaction facilitates recognition of N(6)-methyladenosine (m6A) mRNA. Fe(2+) serves as cofactor. In terms of processing, phosphorylated at Ser-87 and Ser-325 in response to reactive oxygen species (ROS), promoting sumoylation and inactivation. Acetylated by KAT8 at Lys-235, promoting interaction with PSPC1, thereby facilitating recognition of N(6)-methyladenosine (m6A) mRNA by ALKBH5. Deacetylated at Lys-235 by HDAC7. Post-translationally, sumoylated at Lys-86 and Lys-321 by PIAS4 following phosphorylation at Ser-87 and Ser-325 in response to reactive oxygen species (ROS), inhibiting the RNA demethylase activity. Desumoylated by SENP1; relieving RNA demethylase inhibition, leading to N(6)-methyladenosine-containing mRNAs demethylation. In terms of processing, ubiquitinated at Lys-57 via 'Lys-48'-linked polyubiquitin chain, leading to its degradation by the proteasome. Deubiquitinated at Lys-57 by USP9X, promoting its stabilizazion.

The protein localises to the nucleus speckle. It catalyses the reaction an N(6)-methyladenosine in mRNA + 2-oxoglutarate + O2 = an adenosine in mRNA + formaldehyde + succinate + CO2. With respect to regulation, RNA demethylase activity is inhibited following sumoylation. Inhibition is relieved following desumoylation. In terms of biological role, dioxygenase that specifically demethylates N(6)-methyladenosine (m6A) RNA, the most prevalent internal modification of messenger RNA (mRNA) in higher eukaryotes. Demethylates RNA by oxidative demethylation, which requires molecular oxygen, alpha-ketoglutarate and iron. Demethylation of m6A mRNA affects mRNA processing, translation and export. Can also demethylate N(6)-methyladenosine in single-stranded DNA (in vitro). Required for the late meiotic and haploid phases of spermatogenesis by mediating m6A demethylation in spermatocytes and round spermatids: m6A demethylation of target transcripts is required for correct splicing and the production of longer 3'-UTR mRNAs in male germ cells. Involved in paraspeckle assembly, a nuclear membraneless organelle, by undergoing liquid-liquid phase separation. Paraspeckle assembly is coupled with m6A demethylation of RNAs, such as NEAT1 non-coding RNA. Also acts as a negative regulator of T-cell development: inhibits gamma-delta T-cell proliferation via demethylation of JAG1 and NOTCH2 transcripts. Inhibits regulatory T-cell (Treg) recruitment by mediating demethylation and destabilization of CCL28 mRNAs. In Bos taurus (Bovine), this protein is RNA demethylase ALKBH5 (ALKBH5).